Here is a 435-residue protein sequence, read N- to C-terminus: Serine protease snk (435 aa).

The signal sequence occupies residues 1-27; the sequence is MIILWSLIVHLQLTCLHLILQTPNLEA. The region spanning 92-138 is the Clip domain; sequence FCRRSFDGRSGYCILAYQCLHVIREYRVHGTRIDICTHRNNVPVICC. Intrachain disulfides connect Cys93/Cys137, Cys104/Cys127, Cys110/Cys138, Cys179/Cys303, Cys220/Cys236, Cys346/Cys366, and Cys377/Cys408. The Peptidase S1 domain maps to 186–432; that stretch reads IVGGTPTRHG…YLDWIEKIAF (247 aa). His235 functions as the Charge relay system in the catalytic mechanism. An N-linked (GlcNAc...) asparagine glycan is attached at Asn255. Catalysis depends on Asp283, which acts as the Charge relay system. The Charge relay system role is filled by Ser381.

Belongs to the peptidase S1 family. CLIP subfamily. As to quaternary structure, interacts (via N-terminal prodomain) with ea/easter (via Peptidase domain); leads to proteolytic activation of ea by snk. This interaction does not require sulfation of a vitelline membrane component by pip but proteolytic cleavage of ea by snk does. Proteolytically activated by gd. May also be cleaved by another protease.

The protein resides in the secreted. Its function is as follows. Component of the extracellular signaling pathway that establishes the dorsal-ventral pathway of the embryo. A protease cascade involving ndl, gd, snk and ea results in activation of the spz Toll receptor ligand; acts downstream of ndl and gd. Activation of ea requires both activation of the ndl-gd-snk protease cascade and sulfation of a vitelline membrane component by pip. Localized activation of the Toll receptor in the ventral region of the embryo defines cell identities along the dorsal-ventral continuum. This Drosophila melanogaster (Fruit fly) protein is Serine protease snk.